Consider the following 220-residue polypeptide: dTTP/UTP pyrophosphatase (220 aa).

Aspartate 83 functions as the Proton acceptor in the catalytic mechanism.

It belongs to the Maf family. YhdE subfamily. It depends on a divalent metal cation as a cofactor.

Its subcellular location is the cytoplasm. The enzyme catalyses dTTP + H2O = dTMP + diphosphate + H(+). It catalyses the reaction UTP + H2O = UMP + diphosphate + H(+). Functionally, nucleoside triphosphate pyrophosphatase that hydrolyzes dTTP and UTP. May have a dual role in cell division arrest and in preventing the incorporation of modified nucleotides into cellular nucleic acids. This chain is dTTP/UTP pyrophosphatase, found in Syntrophotalea carbinolica (strain DSM 2380 / NBRC 103641 / GraBd1) (Pelobacter carbinolicus).